Here is a 108-residue protein sequence, read N- to C-terminus: Small ribosomal subunit protein uS10 (108 aa).

It belongs to the universal ribosomal protein uS10 family. Part of the 30S ribosomal subunit.

In terms of biological role, involved in the binding of tRNA to the ribosomes. The chain is Small ribosomal subunit protein uS10 from Mycoplasma pneumoniae (strain ATCC 29342 / M129 / Subtype 1) (Mycoplasmoides pneumoniae).